Here is a 608-residue protein sequence, read N- to C-terminus: Afamin (608 aa).

The first 21 residues, M1–A21, serve as a signal peptide directing secretion. Albumin domains follow at residues L22–T210, Q211–E403, and T404–D599. An N-linked (GlcNAc...) asparagine glycan is attached at N33. Cystine bridges form between C77–C86, C99–C114, C113–C124, C148–C193, C224–C270, C269–C277, C289–C303, C302–C313, C340–C385, and C384–C393. N-linked (GlcNAc...) asparagine glycosylation occurs at N109. N-linked (GlcNAc...) asparagine glycosylation occurs at N153. The binding pocket for hydrophobic ligands stretch occupies residues A215 to K319. N402 is a glycosylation site (N-linked (GlcNAc...) asparagine). 5 disulfide bridges follow: C416/C462, C461/C470, C483/C499, C498/C509, and C580/C589. N488 carries an N-linked (GlcNAc...) asparagine glycan. The interval K585–R608 is disordered.

This sequence belongs to the ALB/AFP/VDB family. Forms a 1:1 complex with Wnt family members; interacts with WNT1, WNT2B, WNT3, WNT3A, WNT5A, WNT7A, WNT7B, WNT8, WNT9A, WNT9B, WNT10A and WNT10B. N-glycosylated; more than 90% of the glycans are sialylated.

The protein resides in the secreted. Its function is as follows. Functions as a carrier for hydrophobic molecules in body fluids. Essential for the solubility and activity of lipidated Wnt family members, including WNT1, WNT2B, WNT3, WNT3A, WNT5A, WNT7A, WNT7B, WNT8, WNT9A, WNT9B, WNT10A and WNT10B. Binds vitamin E. May transport vitamin E in body fluids under conditions where the lipoprotein system is not sufficient. May be involved in the transport of vitamin E across the blood-brain barrier. This Rattus norvegicus (Rat) protein is Afamin (Afm).